Consider the following 204-residue polypeptide: COBRA-like protein 5 (204 aa).

Residues 1-24 (MESLFSTMIVLLLVSFSCLISTEA) form the signal peptide. Asn-31 and Asn-195 each carry an N-linked (GlcNAc...) asparagine glycan.

The protein belongs to the COBRA family. In terms of tissue distribution, expressed in roots, stems, leaves, flowers and siliques.

This Arabidopsis thaliana (Mouse-ear cress) protein is COBRA-like protein 5 (COBL5).